Here is a 526-residue protein sequence, read N- to C-terminus: Protein translocase subunit SecD (526 aa).

Transmembrane regions (helical) follow at residues 8–28 (LIVF…SLLE), 356–376 (IIAL…YYSM), 379–399 (VIAC…MAIF), 405–425 (LPGM…NIII), 453–473 (AIFD…AYGT), and 478–498 (GFAL…IIGT).

Belongs to the SecD/SecF family. SecD subfamily. Forms a complex with SecF. Part of the essential Sec protein translocation apparatus which comprises SecA, SecYEG and auxiliary proteins SecDF-YajC and YidC.

It is found in the cell inner membrane. Functionally, part of the Sec protein translocase complex. Interacts with the SecYEG preprotein conducting channel. SecDF uses the proton motive force (PMF) to complete protein translocation after the ATP-dependent function of SecA. The sequence is that of Protein translocase subunit SecD from Helicobacter pylori (strain J99 / ATCC 700824) (Campylobacter pylori J99).